Consider the following 121-residue polypeptide: Large ribosomal subunit protein uL24 (121 aa).

The protein belongs to the universal ribosomal protein uL24 family. In terms of assembly, part of the 50S ribosomal subunit.

One of two assembly initiator proteins, it binds directly to the 5'-end of the 23S rRNA, where it nucleates assembly of the 50S subunit. Its function is as follows. Located at the polypeptide exit tunnel on the outside of the subunit. The polypeptide is Large ribosomal subunit protein uL24 (Thermococcus kodakarensis (strain ATCC BAA-918 / JCM 12380 / KOD1) (Pyrococcus kodakaraensis (strain KOD1))).